We begin with the raw amino-acid sequence, 320 residues long: Transaldolase (320 aa).

The active-site Schiff-base intermediate with substrate is Lys-126.

This sequence belongs to the transaldolase family. Type 1 subfamily. Homodimer.

It is found in the cytoplasm. The enzyme catalyses D-sedoheptulose 7-phosphate + D-glyceraldehyde 3-phosphate = D-erythrose 4-phosphate + beta-D-fructose 6-phosphate. Its pathway is carbohydrate degradation; pentose phosphate pathway; D-glyceraldehyde 3-phosphate and beta-D-fructose 6-phosphate from D-ribose 5-phosphate and D-xylulose 5-phosphate (non-oxidative stage): step 2/3. Transaldolase is important for the balance of metabolites in the pentose-phosphate pathway. This is Transaldolase from Bordetella bronchiseptica (strain ATCC BAA-588 / NCTC 13252 / RB50) (Alcaligenes bronchisepticus).